The primary structure comprises 91 residues: Pre-early 3 receptor internalization and degradation alpha protein (91 aa).

The Cytoplasmic segment spans residues 1–4 (MIPR). Positions 1 to 22 (MIPRVLILLTLVALFCACSTLA) are cleaved as a propeptide — signal peptide. A helical membrane pass occupies residues 5–25 (VLILLTLVALFCACSTLAAVA). Over 26-34 (HIEVDCIPP) the chain is Lumenal. Residues 35-60 (FTVYLLYGFVTLILICSLVTVVIAFI) form a helical membrane-spanning segment. Topologically, residues 61–91 (QFIDWVCVRIAYLRHHPQYRDRTIADLLRIL) are cytoplasmic.

Belongs to the adenoviridae E3-RID-alpha family. In terms of assembly, homodimer with only one chain cleaved by signal peptidase. Interacts with E3 RID-beta and E3 CR1-alpha. Post-translationally, the signal peptide is only cleaved partially by host signal peptidase. This results in two forms of the protein, one uncleaved with two transmembrane regions, and one cleaved with one transmembrane region.

It is found in the host membrane. It localises to the host endoplasmic reticulum. Prevents infected cell apoptosis induced by the host immune system. Acts by down-regulating a number of cell surface receptors in the tumor necrosis factor (TNF) receptor superfamily, namely FAS, TNFRSF10A/TRAIL receptor 1, and TNFRSF10B/TRAIL receptor 2. Down-regulation of these death receptors protects adenovirus-infected cells from apoptosis induced by the death receptor ligands Fas ligand and TRAIL. RID complex also down-regulates certain tyrosine kinase cell surface receptors, especially the epidermal growth factor receptor (EGFR). RID-mediated Fas and EGFR down-regulation occurs via endocytosis of the receptors into endosomes followed by transport to and degradation within lysosomes. The chain is Pre-early 3 receptor internalization and degradation alpha protein from Homo sapiens (Human).